The chain runs to 139 residues: Transcription antitermination protein NusB (139 aa).

This sequence belongs to the NusB family.

In terms of biological role, involved in transcription antitermination. Required for transcription of ribosomal RNA (rRNA) genes. Binds specifically to the boxA antiterminator sequence of the ribosomal RNA (rrn) operons. The protein is Transcription antitermination protein NusB of Enterobacter sp. (strain 638).